Here is a 664-residue protein sequence, read N- to C-terminus: Delta-like protein C (664 aa).

A signal peptide spans 1 to 20; sequence MARVLLTCFFILISSHLGKS. Over 21 to 511 the chain is Extracellular; sequence SGVFELKVLS…VNSPALPAAL (491 aa). Residues 154 to 198 form the DSL domain; it reads VVCDEFYHGEECSDFCRPRNDTFGHFNCDAAGNRICLPGWKGDYC. Cystine bridges form between cysteine 156-cysteine 165, cysteine 169-cysteine 181, cysteine 189-cysteine 198, cysteine 203-cysteine 214, cysteine 207-cysteine 220, cysteine 222-cysteine 231, cysteine 234-cysteine 245, cysteine 240-cysteine 251, cysteine 253-cysteine 262, cysteine 269-cysteine 281, cysteine 275-cysteine 291, cysteine 293-cysteine 302, cysteine 309-cysteine 320, cysteine 314-cysteine 329, cysteine 331-cysteine 340, cysteine 347-cysteine 358, cysteine 352-cysteine 368, cysteine 370-cysteine 379, cysteine 386-cysteine 397, cysteine 391-cysteine 406, cysteine 408-cysteine 417, cysteine 424-cysteine 435, cysteine 429-cysteine 444, cysteine 446-cysteine 455, cysteine 462-cysteine 473, cysteine 467-cysteine 482, and cysteine 484-cysteine 493. N-linked (GlcNAc...) asparagine glycosylation occurs at asparagine 173. EGF-like domains lie at 199-232, 233-263, and 265-303; these read TEPICLSGCSEENGYCEAPGECKCRIGWEGPLCD, ECTRHPGCLHGTCNQPFQCTCKEGWGGLFCN, and DLNFCTNHKPCRNDATCTNTGQGSYTCICKPGFSGKNCE. The region spanning 305 to 341 is the EGF-like 4; calcium-binding domain; that stretch reads ETNECDSNPCKNGGSCNDQENDYTCTCPQGFYGKNCE. 2 consecutive EGF-like domains span residues 343-380 and 382-418; these read SAMTCADGPCFNGGTCMEKGSGSYSCRCPPGYMGSNCE and KIDRCSSDPCANGGQCLDLGNKATCRCRPGFTGSRCE. In terms of domain architecture, EGF-like 7; calcium-binding spans 420–456; that stretch reads NIDDCSSNPCQNAGTCVDGINGYTCTCTLGFSGKDCR. Residues 458–494 enclose the EGF-like 8 domain; the sequence is RSDACSFMPCQNGGTCYTHFSGPVCQCPAGFMGTQCE. Residues 512 to 532 traverse the membrane as a helical segment; it reads IVSFTLGLITLTLVICAAIVV. The Cytoplasmic segment spans residues 533–664; that stretch reads LRQMRQNHKA…IEQRVFATEV (132 aa).

Ubiquitinated by mib, leading to its endocytosis and subsequent degradation. In terms of tissue distribution, strongly expressed in the early retina, where it precedes other delta proteins. Also expressed in cranial ganglia, in sensory epithelia including ear and lateral line and in scattered epidermal cells. In the mesoderm, expression is visible by 50% epiboly; it is expressed subsequently in the tail bud, in stripes in the presomitic mesoderm and in the posterior half of each somite. Also expressed in notochord, blood vessels and pronephros. In contrast to other delta proteins, it is not expressed in the majority of nascent primary neurons. In somites, it marks the posterior part of each formed somite, while deltaD (dld) marks the anterior part.

It localises to the membrane. Functionally, acts as a ligand for Notch receptors and is involved in somitogenesis. Can activate Notch receptors. Required in somite segmentation to keep the oscillations of neighboring presomitic mesoderm cells synchronized. In Danio rerio (Zebrafish), this protein is Delta-like protein C (dlc).